We begin with the raw amino-acid sequence, 166 residues long: Probable dual specificity protein phosphatase H1 homolog (166 aa).

In terms of domain architecture, Tyrosine-protein phosphatase spans 25–166 (DITKITDYVY…FLNQIIDKYI (142 aa)). The active-site Phosphocysteine intermediate is cysteine 108.

It belongs to the protein-tyrosine phosphatase family. Non-receptor class dual specificity subfamily. As to quaternary structure, homodimer.

The protein resides in the virion. It localises to the host cytoplasm. The catalysed reaction is O-phospho-L-tyrosyl-[protein] + H2O = L-tyrosyl-[protein] + phosphate. The enzyme catalyses O-phospho-L-seryl-[protein] + H2O = L-seryl-[protein] + phosphate. Its function is as follows. Serine/Tyrosine phosphatase which down-regulates cellular antiviral response by dephosphorylating activated STAT1 and blocking interferon (IFN)-stimulated innate immune responses. The polypeptide is Probable dual specificity protein phosphatase H1 homolog (Vertebrata (FPV)).